Here is an 883-residue protein sequence, read N- to C-terminus: Alanine--tRNA ligase (883 aa).

Residues His-562, His-566, Cys-664, and His-668 each coordinate Zn(2+).

It belongs to the class-II aminoacyl-tRNA synthetase family. Homotetramer. It depends on Zn(2+) as a cofactor.

The protein resides in the cytoplasm. It catalyses the reaction tRNA(Ala) + L-alanine + ATP = L-alanyl-tRNA(Ala) + AMP + diphosphate. Catalyzes the attachment of alanine to tRNA(Ala) in a two-step reaction: alanine is first activated by ATP to form Ala-AMP and then transferred to the acceptor end of tRNA(Ala). Also edits incorrectly charged Ser-tRNA(Ala) and Gly-tRNA(Ala) via its editing domain. The chain is Alanine--tRNA ligase from Buchnera aphidicola subsp. Schizaphis graminum (strain Sg).